Reading from the N-terminus, the 573-residue chain is MPELSRTAYADLFGPTTGDRVRLADTDLFVEIEEDRSGGPGRSGDEAVFGGGKVLRESMGQGRTTRAQGAPDTVITGALIIDHWGIVKADIGIRDGRITGIGKAGNPDTMDGVHPDLVIGPETEIVAGNGKIVTAGGIDTHVHFIAPGAVDEALASGVTTLIGGGTGPAEGSKATTVTPGAWHLAWMFAALESSPVNIGFLGKGSTMSKESMRDQLRAGVLGFKIHEDWGATPAVISACLDVCEESGVQLAVHSDTLNEAGFVGDTFDAVAGRTLHAFHVEGAGGGHAPDMITAVSLPNMLPASTNPTRPHTVNTVEEHLDMLMVCHHLNPAVPEDLAFAESRIRPSTIAAEDILHDMGAISIMSSDAQAMGRIGEVILRTWQTAHVMKRRRGFLPGDTRADNLRARRYVAKYTINPAVAQGIEHEVGSVETGKLADLVLWDPRFFGAKPQLVIKGGQIAYAQMGDANASIPTPQPVLPRPMYGALGTAPATNSVNFVSEQAVEDGLPERLGLGRAFVPIRSTRGRTKADMRQNDALPRVEVAADSFAVTIDGELVEPAPVTELPLAQRYFLF.

One can recognise a Urease domain in the interval G136–F573. Positions 141, 143, and 224 each coordinate Ni(2+). At K224 the chain carries N6-carboxylysine. H226 is a binding site for substrate. 2 residues coordinate Ni(2+): H253 and H279. The Proton donor role is filled by H327. A Ni(2+)-binding site is contributed by D367.

This sequence belongs to the metallo-dependent hydrolases superfamily. Urease alpha subunit family. May form a heterohexamer of 3 UreC (alpha) and 3 UreAB (gamma/beta) subunits. May also form a heterotrimer of UreA (gamma), UreB (beta) and UreC (alpha) subunits. Three heterotrimers associate to form the active enzyme. Ni cation serves as cofactor. In terms of processing, carboxylation allows a single lysine to coordinate two nickel ions.

It localises to the cytoplasm. It carries out the reaction urea + 2 H2O + H(+) = hydrogencarbonate + 2 NH4(+). The protein operates within nitrogen metabolism; urea degradation; CO(2) and NH(3) from urea (urease route): step 1/1. The protein is Urease subunit alpha 1 of Streptomyces coelicolor (strain ATCC BAA-471 / A3(2) / M145).